The following is a 608-amino-acid chain: Aspartate--tRNA(Asp/Asn) ligase (608 aa).

L-aspartate is bound at residue Glu179. The interval 203-206 is aspartate; that stretch reads QLFK. An L-aspartate-binding site is contributed by Arg225. Residues 225–227 and Gln234 each bind ATP; that span reads RDE. Residue His461 coordinates L-aspartate. Residue Glu494 coordinates ATP. Arg501 provides a ligand contact to L-aspartate. An ATP-binding site is contributed by 546 to 549; that stretch reads GLDR.

Belongs to the class-II aminoacyl-tRNA synthetase family. Type 1 subfamily. Homodimer.

The protein localises to the cytoplasm. It carries out the reaction tRNA(Asx) + L-aspartate + ATP = L-aspartyl-tRNA(Asx) + AMP + diphosphate. In terms of biological role, aspartyl-tRNA synthetase with relaxed tRNA specificity since it is able to aspartylate not only its cognate tRNA(Asp) but also tRNA(Asn). Reaction proceeds in two steps: L-aspartate is first activated by ATP to form Asp-AMP and then transferred to the acceptor end of tRNA(Asp/Asn). This is Aspartate--tRNA(Asp/Asn) ligase from Psychrobacter arcticus (strain DSM 17307 / VKM B-2377 / 273-4).